Reading from the N-terminus, the 340-residue chain is N-acetyl-gamma-glutamyl-phosphate reductase (340 aa).

Cys-146 is a catalytic residue.

It belongs to the NAGSA dehydrogenase family. Type 1 subfamily.

Its subcellular location is the cytoplasm. The enzyme catalyses N-acetyl-L-glutamate 5-semialdehyde + phosphate + NADP(+) = N-acetyl-L-glutamyl 5-phosphate + NADPH + H(+). The protein operates within amino-acid biosynthesis; L-arginine biosynthesis; N(2)-acetyl-L-ornithine from L-glutamate: step 3/4. Catalyzes the NADPH-dependent reduction of N-acetyl-5-glutamyl phosphate to yield N-acetyl-L-glutamate 5-semialdehyde. In Streptococcus gordonii (strain Challis / ATCC 35105 / BCRC 15272 / CH1 / DL1 / V288), this protein is N-acetyl-gamma-glutamyl-phosphate reductase.